Reading from the N-terminus, the 391-residue chain is NADH-quinone oxidoreductase subunit D (391 aa).

The protein belongs to the complex I 49 kDa subunit family. In terms of assembly, NDH-1 is composed of 14 different subunits. Subunits NuoB, C, D, E, F, and G constitute the peripheral sector of the complex.

It localises to the cell inner membrane. The catalysed reaction is a quinone + NADH + 5 H(+)(in) = a quinol + NAD(+) + 4 H(+)(out). In terms of biological role, NDH-1 shuttles electrons from NADH, via FMN and iron-sulfur (Fe-S) centers, to quinones in the respiratory chain. The immediate electron acceptor for the enzyme in this species is believed to be ubiquinone. Couples the redox reaction to proton translocation (for every two electrons transferred, four hydrogen ions are translocated across the cytoplasmic membrane), and thus conserves the redox energy in a proton gradient. This chain is NADH-quinone oxidoreductase subunit D, found in Rickettsia conorii (strain ATCC VR-613 / Malish 7).